A 776-amino-acid polypeptide reads, in one-letter code: Acetone carboxylase alpha subunit (776 aa).

As to quaternary structure, heterohexamer of two alpha, two beta and two gamma subunits. Fe cation is required as a cofactor. Requires Mg(2+) as cofactor. Zn(2+) serves as cofactor. The N-terminus is blocked.

The catalysed reaction is acetone + hydrogencarbonate + 2 ATP + 3 H2O = acetoacetate + 2 AMP + 4 phosphate + 4 H(+). In terms of biological role, catalyzes the carboxylation of acetone to form acetoacetate. Has a reduced activity on butanone, and no activity on 2-pentatone, 3-pentatone, 2-hexanone, chloroacetone, pyruvate, phosphoenolpyruvate, acetaldehyde, propionaldehyde and propylene oxide. The polypeptide is Acetone carboxylase alpha subunit (Xanthobacter autotrophicus (strain ATCC BAA-1158 / Py2)).